We begin with the raw amino-acid sequence, 219 residues long: Phosphatidylserine decarboxylase proenzyme (219 aa).

Ser-188 acts as the Schiff-base intermediate with substrate; via pyruvic acid in catalysis. At Ser-188 the chain carries Pyruvic acid (Ser); by autocatalysis.

The protein belongs to the phosphatidylserine decarboxylase family. PSD-A subfamily. As to quaternary structure, heterodimer of a large membrane-associated beta subunit and a small pyruvoyl-containing alpha subunit. The cofactor is pyruvate. Post-translationally, is synthesized initially as an inactive proenzyme. Formation of the active enzyme involves a self-maturation process in which the active site pyruvoyl group is generated from an internal serine residue via an autocatalytic post-translational modification. Two non-identical subunits are generated from the proenzyme in this reaction, and the pyruvate is formed at the N-terminus of the alpha chain, which is derived from the carboxyl end of the proenzyme. The post-translation cleavage follows an unusual pathway, termed non-hydrolytic serinolysis, in which the side chain hydroxyl group of the serine supplies its oxygen atom to form the C-terminus of the beta chain, while the remainder of the serine residue undergoes an oxidative deamination to produce ammonia and the pyruvoyl prosthetic group on the alpha chain.

It localises to the cell membrane. It catalyses the reaction a 1,2-diacyl-sn-glycero-3-phospho-L-serine + H(+) = a 1,2-diacyl-sn-glycero-3-phosphoethanolamine + CO2. It participates in phospholipid metabolism; phosphatidylethanolamine biosynthesis; phosphatidylethanolamine from CDP-diacylglycerol: step 2/2. Its function is as follows. Catalyzes the formation of phosphatidylethanolamine (PtdEtn) from phosphatidylserine (PtdSer). The chain is Phosphatidylserine decarboxylase proenzyme from Trichlorobacter lovleyi (strain ATCC BAA-1151 / DSM 17278 / SZ) (Geobacter lovleyi).